Consider the following 150-residue polypeptide: Large ribosomal subunit protein bL9 (150 aa).

It belongs to the bacterial ribosomal protein bL9 family.

In terms of biological role, binds to the 23S rRNA. The sequence is that of Large ribosomal subunit protein bL9 from Streptococcus pyogenes serotype M6 (strain ATCC BAA-946 / MGAS10394).